A 238-amino-acid chain; its full sequence is Purine nucleoside phosphorylase DeoD-type (238 aa).

H4 is a binding site for a purine D-ribonucleoside. Phosphate contacts are provided by residues G20, R24, R43, and 87–90; that span reads RVGS. A purine D-ribonucleoside is bound by residues 179–181 and 203–204; these read EME and SD. The active-site Proton donor is the D204.

The protein belongs to the PNP/UDP phosphorylase family. In terms of assembly, homohexamer; trimer of homodimers.

The enzyme catalyses a purine D-ribonucleoside + phosphate = a purine nucleobase + alpha-D-ribose 1-phosphate. The catalysed reaction is a purine 2'-deoxy-D-ribonucleoside + phosphate = a purine nucleobase + 2-deoxy-alpha-D-ribose 1-phosphate. Functionally, catalyzes the reversible phosphorolytic breakdown of the N-glycosidic bond in the beta-(deoxy)ribonucleoside molecules, with the formation of the corresponding free purine bases and pentose-1-phosphate. This is Purine nucleoside phosphorylase DeoD-type from Haemophilus influenzae (strain PittGG).